The chain runs to 250 residues: Triosephosphate isomerase (250 aa).

9–11 (NWK) is a binding site for substrate. His-100 serves as the catalytic Electrophile. Glu-169 acts as the Proton acceptor in catalysis. Residues Gly-175, Ser-208, and 229–230 (GG) contribute to the substrate site.

This sequence belongs to the triosephosphate isomerase family. As to quaternary structure, homodimer.

Its subcellular location is the cytoplasm. The catalysed reaction is D-glyceraldehyde 3-phosphate = dihydroxyacetone phosphate. It functions in the pathway carbohydrate biosynthesis; gluconeogenesis. Its pathway is carbohydrate degradation; glycolysis; D-glyceraldehyde 3-phosphate from glycerone phosphate: step 1/1. Functionally, involved in the gluconeogenesis. Catalyzes stereospecifically the conversion of dihydroxyacetone phosphate (DHAP) to D-glyceraldehyde-3-phosphate (G3P). The sequence is that of Triosephosphate isomerase from Synechococcus sp. (strain JA-2-3B'a(2-13)) (Cyanobacteria bacterium Yellowstone B-Prime).